Here is a 243-residue protein sequence, read N- to C-terminus: Probable phosphatase CLD_1129 (243 aa).

Zn(2+)-binding residues include H8, H10, H16, H41, E74, H102, H132, D192, and H194.

The protein belongs to the PHP family. Zn(2+) is required as a cofactor.

This Clostridium botulinum (strain Okra / Type B1) protein is Probable phosphatase CLD_1129.